Here is a 278-residue protein sequence, read N- to C-terminus: Putative ABC transporter ATP-binding protein MTBMA_c05830 (278 aa).

The ABC transporter domain maps to 4–239 (IEAVNIRYTY…IDTIRGADLR (236 aa)). An ATP-binding site is contributed by 37–44 (GPNGAGKS).

The protein belongs to the ABC transporter superfamily.

Its subcellular location is the cell membrane. Functionally, probably part of an ABC transporter complex. Responsible for energy coupling to the transport system. The polypeptide is Putative ABC transporter ATP-binding protein MTBMA_c05830 (Methanothermobacter marburgensis (strain ATCC BAA-927 / DSM 2133 / JCM 14651 / NBRC 100331 / OCM 82 / Marburg) (Methanobacterium thermoautotrophicum)).